The primary structure comprises 394 residues: Glycerol-1-phosphate dehydrogenase [NAD(P)+] (394 aa).

Residues Asp-54, 116–120 (GTIHD), and 138–141 (TAPS) contribute to the NAD(+) site. Asp-143 provides a ligand contact to substrate. Ser-147 contacts NAD(+). Residue Asp-190 coordinates substrate. Positions 190 and 270 each coordinate Ni(2+). Substrate is bound at residue His-274. His-290 lines the Ni(2+) pocket.

It belongs to the glycerol-1-phosphate dehydrogenase family. As to quaternary structure, homodimer. Ni(2+) serves as cofactor.

It is found in the cytoplasm. The enzyme catalyses sn-glycerol 1-phosphate + NAD(+) = dihydroxyacetone phosphate + NADH + H(+). It catalyses the reaction sn-glycerol 1-phosphate + NADP(+) = dihydroxyacetone phosphate + NADPH + H(+). In terms of biological role, catalyzes the NAD(P)H-dependent reduction of dihydroxyacetonephosphate (DHAP or glycerone phosphate) to glycerol 1-phosphate (G1P). The G1P thus generated is probably used for the synthesis of phosphoglycerolipids in Gram-positive bacterial species. Prefers NADH over NADPH as coenzyme. Is also able to catalyze the reverse reaction, i.e. the NAD(+)-dependent oxidation of G1P but not of G3P. Does not possess glycerol dehydrogenase activity. The chain is Glycerol-1-phosphate dehydrogenase [NAD(P)+] (egsA) from Bacillus subtilis (strain 168).